We begin with the raw amino-acid sequence, 668 residues long: Potassium voltage-gated channel subfamily KQT member 1 (668 aa).

Topologically, residues 1 to 119 are cytoplasmic; sequence MDTASSPPSA…YNFLERPTGW (119 aa). Ser-27 is subject to Phosphoserine; by PKA. A helical transmembrane segment spans residues 120-141; the sequence is KCFVYHFTVFLIVLVCLIFSVL. At 142–152 the chain is on the extracellular side; sequence STIEQYAALAT. Residues 153–175 form a helical membrane-spanning segment; that stretch reads GTLFWMEIVLVVFFGTEYVVRLW. Residues 176-191 lie on the Cytoplasmic side of the membrane; it reads SAGCRSKYVGIWGRLR. The chain crosses the membrane as a helical span at residues 192–217; sequence FARKPISIIDLIVVVASMVVLCVGSK. Topologically, residues 218–225 are extracellular; that stretch reads GQVFATSA. A helical; Voltage-sensor transmembrane segment spans residues 226 to 241; sequence IRGIRFLQILRMLHVD. An interaction with KCNE3 region spans residues 237–245; sequence MLHVDRQGG. Over 242–259 the chain is Cytoplasmic; the sequence is RQGGTWRLLGSVVFIHRQ. An a 1,2-diacyl-sn-glycero-3-phospho-(1D-myo-inositol-4,5-bisphosphate)-binding site is contributed by Gln-243. The chain crosses the membrane as a helical span at residues 260–282; that stretch reads ELITTLYIGFLGLIFSSYFVYLA. Residues 283–298 lie on the Extracellular side of the membrane; it reads EKDAVNESGRIEFGSY. Residue Asn-288 is glycosylated (N-linked (GlcNAc...) asparagine). The segment at residues 299–319 is an intramembrane region (pore-forming); it reads ADALWWGVVTVTTIGYGDKVP. At 320 to 321 the chain is on the extracellular side; that stretch reads QT. The helical transmembrane segment at 322-347 threads the bilayer; the sequence is WVGKTIASCFSVFAISFFALPAGILG. Over 348-668 the chain is Cytoplasmic; the sequence is SGFALKVQQK…VPQTGPDEGS (321 aa). Residues 369 to 381 are interaction with CALM; that stretch reads AAASLIQTAWRCY. Phosphoserine occurs at positions 406 and 408. Residues 514-528 are interaction with CALM; calcium-dependent; the sequence is KVIRRMQYFVAKKKF. Positions 534–571 are interaction with KCNE1 C-terminus; it reads PYDVRDVIEQYSQGHLNLMVRIKELQRRLDQSIGKPSL. Positions 584–620 form a coiled coil; sequence SNTIGARLNRVEDKVTQLDQRLVIITDMLHQLLSMQQ. The interval 587–615 is interaction with AKAP9; it reads IGARLNRVEDKVTQLDQRLVIITDMLHQL. The C-terminal assembly domain (tetramerization) stretch occupies residues 588–619; it reads GARLNRVEDKVTQLDQRLVIITDMLHQLLSMQ.

This sequence belongs to the potassium channel family. KQT (TC 1.A.1.15) subfamily. Kv7.1/KCNQ1 sub-subfamily. Tetramer. Heterotetramer with KCNE1; form the native cardiac channel I(Ks) which increases the amplitude and slows down the activation kinetics of outward potassium current and targets to the membrane raft. Interacts (via C-terminus) with CALM; forms a heterooctameric structure (with 4:4 KCNQ1:CALM stoichiometry) in a calcium-independent manner. Interacts with AKAP9; targets protein kinase A (PKA) catalytic and regulatory subunits and protein phosphatase 1 (PP1) to the KCNQ1-KCNE1 complex, allowing PKA-mediated phosphorylation and increase of delayed rectifier potassium channel activity. Interacts with KCNE2; form an heterooligomer complex that targets to the membrane raft and leading to currents with an apparently instantaneous activation, a rapid deactivation process and a linear current-voltage relationship and decreases the amplitude of the outward current. Interacts with AP2M1; mediates estrogen-induced internalization via clathrin-coated vesicles. Interacts with NEDD4L; promotes internalization and decreases I(Ks) currents. Interacts with USP2; counteracts the NEDD4L-specific down-regulation of I(Ks) and restore plasma membrane localization. Heterotetramer with KCNQ5; has a voltage-gated potassium channel activity. Interacts with KCNE3; four KCNE3 molecules are bound to one KCNQ1 tetramer (4:4 KCNQ1:KCNE3 stoichiometry); alters membrane raft localization; affects KCNQ1 structure and gating properties. Interacts with KCNE4; impairs KCNQ1 localization in lipid rafts and inhibits voltage-gated potassium channel activity. Interacts with KCNE5; impairs KCNQ1 localization in lipid rafts and only conducts current upon strong and continued depolarization. Interacts with SLC5A3; forms coregulatory channel-transporter complexes that modulate Na(+)-coupled myo-inositol influx through the transporter. Post-translationally, phosphorylation at Ser-27 by PKA; increases delayed rectifier potassium channel activity of the KCNQ1-KCNE1 complex through a macromolecular complex that includes PKA, PP1, and the targeting protein AKAP9. In terms of processing, ubiquitinated by NEDD4L; promotes internalization. The ubiquitinylated form is internalized through a clathrin-mediated endocytosis by interacting with AP2M1 and is recycled back to the cell membrane via RAB4A and RAB11A. Deubiquitinated by USP2; counteracts the NEDD4L-specific down-regulation of I(Ks) and restores the membrane localization. As to expression, expressed in heart, kidney and salivary glands. Detected in the cochlea. Almost undetectable in brain, skeletal muscle and liver. Widely expressed in embryonic and neonatal tissues. Expressed in choroid plexus epithelium (at protein level).

The protein localises to the cell membrane. The protein resides in the cytoplasmic vesicle membrane. It is found in the early endosome. Its subcellular location is the membrane raft. It localises to the endoplasmic reticulum. The protein localises to the basolateral cell membrane. The protein resides in the apical cell membrane. The catalysed reaction is K(+)(in) = K(+)(out). PIP2 molecule is essential to activate KCNQ channels by inducing the coupling of the voltage-sensing domain (VSD) and the pore-forming domain (PD). Upon channel activation, PIP2 disrupts the VSD-calmodulin/CALM interactions, causing the release of CALM from the VSD which triggers the opening of the gate. Calcium potentiates KCNQ1 channel current through calcium-bound CALM. Calcium-bound CALM competes with PIP2 to stabilize the channel open state. Pore-forming subunit of the voltage-gated potassium (Kv) channel involved in the regulation of cardiomyocyte excitability and important in normal development and functions of myocardium, inner ear, stomach and colon. Associates with KCNE beta subunits that modulates current kinetics. Induces a voltage-dependent by rapidly activating and slowly deactivating potassium-selective outward current. Also promotes a delayed voltage activated potassium current showing outward rectification characteristic. During beta-adrenergic receptor stimulation participates in cardiac increases the amplitude and slows down the activation kinetics of outward potassium current I(Ks). Muscarinic agonist oxotremorine-M strongly suppresses KCNQ1/KCNE1 current. When associated with KCNE3, forms the potassium channel that is important for cyclic AMP-stimulated intestinal secretion of chloride ions. This interaction with KCNE3 is reduced by 17beta-estradiol, resulting in the reduction of currents. During conditions of increased substrate load, maintains the driving force for proximal tubular and intestinal sodium ions absorption, gastric acid secretion, and cAMP-induced jejunal chloride ions secretion. Allows the provision of potassium ions to the luminal membrane of the secretory canaliculus in the resting state as well as during stimulated acid secretion. When associated with KCNE2, forms a heterooligomer complex leading to currents with an apparently instantaneous activation, a rapid deactivation process and a linear current-voltage relationship and decreases the amplitude of the outward current. When associated with KCNE4, inhibits voltage-gated potassium channel activity. When associated with KCNE5, this complex only conducts current upon strong and continued depolarization. Also forms a heterotetramer with KCNQ5; has a voltage-gated potassium channel activity. Binds with phosphatidylinositol 4,5-bisphosphate. KCNQ1-KCNE2 channel associates with Na(+)-coupled myo-inositol symporter in the apical membrane of choroid plexus epithelium and regulates the myo-inositol gradient between blood and cerebrospinal fluid with an impact on neuron excitability. The chain is Potassium voltage-gated channel subfamily KQT member 1 from Mus musculus (Mouse).